Consider the following 777-residue polypeptide: BRCA1-associated RING domain protein 1 (777 aa).

The tract at residues 1-32 (MPDNRQPRNRQPRIRSGNEPRSAPAMEPDGRG) is disordered. An interaction with BRCA1 region spans residues 26-119 (MEPDGRGAWA…KLRNLLHDNE (94 aa)). The RING-type zinc-finger motif lies at 50–87 (CSRCTNILREPVCLGGCEHIFCSNCVSDCIGTGCPVCY). Residues Lys160 and Lys170 each participate in a glycyl lysine isopeptide (Lys-Gly) (interchain with G-Cter in SUMO2) cross-link. The segment at 167-211 (PAIKKDASAQQDSYEFVSPSPPADVSERAKKASARSGKKQKKKTL) is disordered. Ser186 carries the phosphoserine modification. The span at 197-209 (KASARSGKKQKKK) shows a compositional bias: basic residues. Thr299 carries the phosphothreonine modification. Residues 356-404 (NIPLPECSSPPSCKRKVGGTSGRKNSNMSDEFISLSPGTPPSTLSSSSY) are disordered. Over residues 389-404 (SLSPGTPPSTLSSSSY) the composition is skewed to low complexity. Ser391 is modified (phosphoserine). Residue Thr394 is modified to Phosphothreonine. Residue Lys423 forms a Glycyl lysine isopeptide (Lys-Gly) (interchain with G-Cter in SUMO2) linkage. 3 ANK repeats span residues 427 to 459 (RGET…VKDH), 460 to 492 (AGWT…TTGY), and 493 to 525 (QNDS…AVNI). One copy of the ANK 4; degenerate repeat lies at 526 to 546 (FGLRPVDYTDDESMKSLLLLP). Lys548 participates in a covalent cross-link: Glycyl lysine isopeptide (Lys-Gly) (interchain with G-Cter in SUMO2). The flexible linker stretch occupies residues 554-558 (ASHCS). BRCT domains lie at 560–653 (MNTG…KYEI) and 667–777 (LLPK…PLDS).

Homo- and heterodimer. Heterodimer (RING-type zinc finger) with BRCA1. Heterodimer (via ANK repeats and BRCT domains) with CSTF1/CSTF-50. Component of the BRCA1-A complex, at least composed of the BRCA1, BARD1, UIMC1/RAP80, ABRAXAS1, BRCC3/BRCC36, BABAM2 and BABAM1/NBA1. Interacts with UBXN1. In terms of processing, processed during apoptosis. The homodimer is more susceptible to proteolytic cleavage than the BARD1/BRCA1 heterodimer.

The protein localises to the nucleus. The catalysed reaction is S-ubiquitinyl-[E2 ubiquitin-conjugating enzyme]-L-cysteine + [acceptor protein]-L-lysine = [E2 ubiquitin-conjugating enzyme]-L-cysteine + N(6)-ubiquitinyl-[acceptor protein]-L-lysine.. Its pathway is protein modification; protein ubiquitination. Functionally, E3 ubiquitin-protein ligase. The BRCA1-BARD1 heterodimer specifically mediates the formation of 'Lys-6'-linked polyubiquitin chains and coordinates a diverse range of cellular pathways such as DNA damage repair, ubiquitination and transcriptional regulation to maintain genomic stability. Plays a central role in the control of the cell cycle in response to DNA damage. Acts by mediating ubiquitin E3 ligase activity that is required for its tumor suppressor function. Also forms a heterodimer with CSTF1/CSTF-50 to modulate mRNA processing and RNAP II stability by inhibiting pre-mRNA 3' cleavage. The chain is BRCA1-associated RING domain protein 1 (BARD1) from Homo sapiens (Human).